Consider the following 534-residue polypeptide: EH domain-containing protein 1 (534 aa).

M1 carries the N-acetylmethionine modification. The 232-residue stretch at 55 to 286 (FDNKPMVLLV…DLFKDIQSLP (232 aa)) folds into the Dynamin-type G domain. The tract at residues 65-72 (GQYSTGKT) is G1 motif. Residue 65 to 72 (GQYSTGKT) participates in ATP binding. A G2 motif region spans residues 91 to 92 (EP). The tract at residues 153–156 (DTPG) is G3 motif. The stretch at 198-227 (DEFSEVIKALKNHEDKIRVVLNKADQIETQ) forms a coiled coil. The segment at 219-222 (NKAD) is G4 motif. An ATP-binding site is contributed by K220. Position 243 (I243) is a region of interest, G5 motif. W258 contacts ATP. S355 and S456 each carry phosphoserine. An EH domain is found at 444–532 (DKPTYDEIFY…PHLVPPSKRR (89 aa)). The 36-residue stretch at 476–511 (LPNTVLGKIWKLADVDKDGLLDDEEFALANHLIKVK) folds into the EF-hand domain. The Ca(2+) site is built by D489, D491, D493, and E500.

Belongs to the TRAFAC class dynamin-like GTPase superfamily. Dynamin/Fzo/YdjA family. EHD subfamily. As to quaternary structure, homooligomer, and heterooligomer with EHD2, EHD3 and EHD4, ATP-binding is required for heterooligomerization. Interacts (via EH domain) with MICALL1 (via NPF1 motif); the interaction is direct and recruits EHD1 to membranes. Interacts with RAB35; the interaction is indirect through MICALL1 and recruits EHD1 to membranes. Interacts (via EH domain) with PACSIN2 (via NPF motifs); regulates localization to tubular recycling endosome membranes. Interacts with PACSIN1. Interacts with RAB8A. Interacts with FER1L5 (via second C2 domain). Interacts with MYOF. Interacts with ZFYVE20. Interacts (via EH domain) with RAB11FIP2.

It localises to the recycling endosome membrane. It is found in the early endosome membrane. The protein localises to the cell membrane. Its subcellular location is the cell projection. The protein resides in the cilium membrane. Its function is as follows. ATP- and membrane-binding protein that controls membrane reorganization/tubulation upon ATP hydrolysis. Acts in early endocytic membrane fusion and membrane trafficking of recycling endosomes. Recruited to endosomal membranes upon nerve growth factor stimulation, indirectly regulates neurite outgrowth. Plays a role in myoblast fusion. Involved in the unidirectional retrograde dendritic transport of endocytosed BACE1 and in efficient sorting of BACE1 to axons implicating a function in neuronal APP processing. Plays a role in the formation of the ciliary vesicle (CV), an early step in cilium biogenesis. Proposed to be required for the fusion of distal appendage vesicles (DAVs) to form the CV by recruiting SNARE complex component SNAP29. Is required for recruitment of transition zone proteins CEP290, RPGRIP1L, TMEM67 and B9D2, and of IFT20 following DAV reorganization before Rab8-dependent ciliary membrane extension. Required for the loss of CCP110 form the mother centriole essential for the maturation of the basal body during ciliogenesis. This is EH domain-containing protein 1 from Pongo abelii (Sumatran orangutan).